Here is a 156-residue protein sequence, read N- to C-terminus: 6,7-dimethyl-8-ribityllumazine synthase (156 aa).

Residues Phe-25, 59–61 (AWE), and 83–85 (AVI) each bind 5-amino-6-(D-ribitylamino)uracil. Position 88–89 (88–89 (ST)) interacts with (2S)-2-hydroxy-3-oxobutyl phosphate. Catalysis depends on His-91, which acts as the Proton donor. A 5-amino-6-(D-ribitylamino)uracil-binding site is contributed by Asn-116. (2S)-2-hydroxy-3-oxobutyl phosphate is bound at residue Arg-130.

It belongs to the DMRL synthase family. In terms of assembly, forms an icosahedral capsid composed of 60 subunits, arranged as a dodecamer of pentamers.

It catalyses the reaction (2S)-2-hydroxy-3-oxobutyl phosphate + 5-amino-6-(D-ribitylamino)uracil = 6,7-dimethyl-8-(1-D-ribityl)lumazine + phosphate + 2 H2O + H(+). The protein operates within cofactor biosynthesis; riboflavin biosynthesis; riboflavin from 2-hydroxy-3-oxobutyl phosphate and 5-amino-6-(D-ribitylamino)uracil: step 1/2. Catalyzes the formation of 6,7-dimethyl-8-ribityllumazine by condensation of 5-amino-6-(D-ribitylamino)uracil with 3,4-dihydroxy-2-butanone 4-phosphate. This is the penultimate step in the biosynthesis of riboflavin. The sequence is that of 6,7-dimethyl-8-ribityllumazine synthase from Acinetobacter baumannii (strain AB0057).